We begin with the raw amino-acid sequence, 201 residues long: Protease (201 aa).

Residues histidine 55, aspartate 72, and cysteine 122 contribute to the active site.

The protein belongs to the peptidase C5 family. As to quaternary structure, interacts with protease cofactor pVI-C; this interaction is necessary for protease activation.

The protein resides in the virion. The protein localises to the host nucleus. It carries out the reaction Cleaves proteins of the adenovirus and its host cell at two consensus sites: -Yaa-Xaa-Gly-Gly-|-Xaa- and -Yaa-Xaa-Gly-Xaa-|-Gly- (in which Yaa is Met, Ile or Leu, and Xaa is any amino acid).. Its activity is regulated as follows. Requires DNA and protease cofactor for maximal activation. Inside nascent virions, becomes partially activated by binding to the viral DNA, allowing it to cleave the cofactor that binds to the protease and fully activates it. Actin, like the viral protease cofactor, seems to act as a cofactor in the cleavage of cytokeratin 18 and of actin itself. Cleaves viral precursor proteins (pTP, pIIIa, pVI, pVII, pVIII, and pX) inside newly assembled particles giving rise to mature virions. Protease complexed to its cofactor slides along the viral DNA to specifically locate and cleave the viral precursors. Mature virions have a weakened organization compared to the unmature virions, thereby facilitating subsequent uncoating. Without maturation, the particle lacks infectivity and is unable to uncoat. Late in adenovirus infection, in the cytoplasm, may participate in the cytoskeleton destruction. Cleaves host cell cytoskeletal keratins K7 and K18. In Bovine adenovirus 4 (BAdV-4), this protein is Protease.